A 266-amino-acid polypeptide reads, in one-letter code: 3-deoxy-manno-octulosonate cytidylyltransferase (266 aa).

The protein belongs to the KdsB family.

It localises to the cytoplasm. The enzyme catalyses 3-deoxy-alpha-D-manno-oct-2-ulosonate + CTP = CMP-3-deoxy-beta-D-manno-octulosonate + diphosphate. Its pathway is nucleotide-sugar biosynthesis; CMP-3-deoxy-D-manno-octulosonate biosynthesis; CMP-3-deoxy-D-manno-octulosonate from 3-deoxy-D-manno-octulosonate and CTP: step 1/1. The protein operates within bacterial outer membrane biogenesis; lipopolysaccharide biosynthesis. In terms of biological role, activates KDO (a required 8-carbon sugar) for incorporation into bacterial lipopolysaccharide in Gram-negative bacteria. The sequence is that of 3-deoxy-manno-octulosonate cytidylyltransferase from Paraburkholderia xenovorans (strain LB400).